A 653-amino-acid chain; its full sequence is Dual specificity protein kinase shkB (653 aa).

Residues 112–133 (NPNNNNNNSNNTNSSDSNQNYS) form a disordered region. Residues 174–432 (YNREAKLGSG…FAEISKQRIL (259 aa)) enclose the Protein kinase domain. ATP contacts are provided by residues 180 to 188 (LGSGAFGSV) and K201. D298 acts as the Proton acceptor in catalysis. The SH2 domain maps to 534-625 (GFMAATSSKN…IKEPFEGGPF (92 aa)).

Belongs to the protein kinase superfamily. TKL Ser/Thr protein kinase family. SH2 domain-containing protein kinase subfamily.

It localises to the membrane. The catalysed reaction is L-seryl-[protein] + ATP = O-phospho-L-seryl-[protein] + ADP + H(+). The enzyme catalyses L-threonyl-[protein] + ATP = O-phospho-L-threonyl-[protein] + ADP + H(+). Functionally, required for proper chemotaxis and phagocytosis; proper spatiotemporal control of F-actin levels in chemotaxing cells. Negative regulator of the PI3K (phosphatidylinositol 3 kinase) pathway. Predominantly phosphorylates serines and threonines and tyrosines at a lower level. The sequence is that of Dual specificity protein kinase shkB (shkB) from Dictyostelium discoideum (Social amoeba).